A 105-amino-acid chain; its full sequence is Urease subunit beta (105 aa).

The protein belongs to the urease beta subunit family. Heterotrimer of UreA (gamma), UreB (beta) and UreC (alpha) subunits. Three heterotrimers associate to form the active enzyme.

The protein localises to the cytoplasm. It catalyses the reaction urea + 2 H2O + H(+) = hydrogencarbonate + 2 NH4(+). It participates in nitrogen metabolism; urea degradation; CO(2) and NH(3) from urea (urease route): step 1/1. In Shewanella halifaxensis (strain HAW-EB4), this protein is Urease subunit beta.